A 181-amino-acid chain; its full sequence is Protein Syd (181 aa).

Belongs to the Syd family.

The protein localises to the cell inner membrane. Functionally, interacts with the SecY protein in vivo. May bind preferentially to an uncomplexed state of SecY, thus functioning either as a chelating agent for excess SecY in the cell or as a regulatory factor that negatively controls the translocase function. This Alteromonas mediterranea (strain DSM 17117 / CIP 110805 / LMG 28347 / Deep ecotype) protein is Protein Syd.